The following is a 694-amino-acid chain: Long-chain-fatty-acid--CoA ligase 3 (694 aa).

The interval 1–25 (MSEQHSVAVGKAANEHETAPRRNVR) is disordered. An N-acetylserine modification is found at S2. 269-280 (YTSGSISAPKGV) provides a ligand contact to ATP. Residues 527 to 576 (DGWFRTGDIVEWTPKGQLKIIDRRKNLVKTLNGEYIALEKLESVYRSNSY) carry the FACS motif.

This sequence belongs to the ATP-dependent AMP-binding enzyme family. As to quaternary structure, interacts with FRK1. The cofactor is Mg(2+).

Its subcellular location is the cell membrane. The catalysed reaction is a long-chain fatty acid + ATP + CoA = a long-chain fatty acyl-CoA + AMP + diphosphate. The enzyme catalyses (9Z)-octadecenoate + ATP + CoA = (9Z)-octadecenoyl-CoA + AMP + diphosphate. It catalyses the reaction hexadecanoate + ATP + CoA = hexadecanoyl-CoA + AMP + diphosphate. It carries out the reaction (9Z)-hexadecenoate + ATP + CoA = (9Z)-hexadecenoyl-CoA + AMP + diphosphate. The catalysed reaction is (9Z)-tetradecenoate + ATP + CoA = (9Z)-tetradecenoyl-CoA + AMP + diphosphate. The enzyme catalyses (9Z,12Z)-octadecadienoate + ATP + CoA = (9Z,12Z)-octadecadienoyl-CoA + AMP + diphosphate. Activates endogenous long-chain fatty acids (LCFA) by esterification of the fatty acids into metabolically active CoA-thioesters for subsequent degradation or incorporation into phospholipids. Acts preferentially on C16 and C18 fatty acids with a cis-double bond at C-9-C-10. In Saccharomyces cerevisiae (strain ATCC 204508 / S288c) (Baker's yeast), this protein is Long-chain-fatty-acid--CoA ligase 3 (FAA3).